Here is a 335-residue protein sequence, read N- to C-terminus: Acetyl-coenzyme A carboxylase carboxyl transferase subunit alpha (335 aa).

The region spanning 40–294 (QLETLATRRR…KGAIEKHLNE (255 aa)) is the CoA carboxyltransferase C-terminal domain.

It belongs to the AccA family. Acetyl-CoA carboxylase is a heterohexamer composed of biotin carboxyl carrier protein (AccB), biotin carboxylase (AccC) and two subunits each of ACCase subunit alpha (AccA) and ACCase subunit beta (AccD).

It localises to the cytoplasm. It catalyses the reaction N(6)-carboxybiotinyl-L-lysyl-[protein] + acetyl-CoA = N(6)-biotinyl-L-lysyl-[protein] + malonyl-CoA. Its pathway is lipid metabolism; malonyl-CoA biosynthesis; malonyl-CoA from acetyl-CoA: step 1/1. Its function is as follows. Component of the acetyl coenzyme A carboxylase (ACC) complex. First, biotin carboxylase catalyzes the carboxylation of biotin on its carrier protein (BCCP) and then the CO(2) group is transferred by the carboxyltransferase to acetyl-CoA to form malonyl-CoA. The polypeptide is Acetyl-coenzyme A carboxylase carboxyl transferase subunit alpha (Prochlorococcus marinus subsp. pastoris (strain CCMP1986 / NIES-2087 / MED4)).